We begin with the raw amino-acid sequence, 439 residues long: S-layer protein (439 aa).

An N-terminal signal peptide occupies residues 1–30 (MKKNLRIVSAAAAALLAVAPIAATAMPVNA).

In terms of processing, glycosylated.

It localises to the secreted. The protein resides in the cell wall. Its subcellular location is the S-layer. Its function is as follows. The S-layer is a paracrystalline mono-layered assembly of proteins which coat the surface of bacteria. This is S-layer protein (slpH) from Lactobacillus helveticus (Lactobacillus suntoryeus).